The sequence spans 539 residues: Glycine betaine transporter 2 (539 aa).

The next 12 membrane-spanning stretches (helical) occupy residues 44–64 (LTNP…LLAL), 85–105 (FGAY…ALAF), 129–149 (IVLC…EPIA), 175–195 (FMHW…IVLM), 231–251 (CSII…GLQI), 265–285 (FITQ…SALS), 299–319 (IILS…SFII), 348–368 (WWTV…AIFI), 380–400 (LILS…SIVG), 426–446 (VLLA…LFLI), 480–500 (FWGL…SGGI), and 503–523 (LQSF…PSIL).

This sequence belongs to the BCCT transporter (TC 2.A.15) family.

The protein localises to the cell inner membrane. Functionally, involved in the uptake of the osmoprotectant glycine betaine. The protein is Glycine betaine transporter 2 of Vibrio parahaemolyticus serotype O3:K6 (strain RIMD 2210633).